The following is a 274-amino-acid chain: Ribosomal RNA small subunit methyltransferase A (274 aa).

Positions 28, 30, 55, 77, 103, and 122 each coordinate S-adenosyl-L-methionine.

The protein belongs to the class I-like SAM-binding methyltransferase superfamily. rRNA adenine N(6)-methyltransferase family. RsmA subfamily.

It is found in the cytoplasm. The catalysed reaction is adenosine(1518)/adenosine(1519) in 16S rRNA + 4 S-adenosyl-L-methionine = N(6)-dimethyladenosine(1518)/N(6)-dimethyladenosine(1519) in 16S rRNA + 4 S-adenosyl-L-homocysteine + 4 H(+). Specifically dimethylates two adjacent adenosines (A1518 and A1519) in the loop of a conserved hairpin near the 3'-end of 16S rRNA in the 30S particle. May play a critical role in biogenesis of 30S subunits. This is Ribosomal RNA small subunit methyltransferase A from Sinorhizobium medicae (strain WSM419) (Ensifer medicae).